We begin with the raw amino-acid sequence, 733 residues long: DNA-binding protein SATB2 (733 aa).

The segment at 1–47 (MERRSESPCLRDSPDRRSGSPDVKGPPPVKVARLEQNGSPMGARGRP) is disordered. S20 bears the Phosphoserine mark. Residues K24 and K30 each participate in a glycyl lysine isopeptide (Lys-Gly) (interchain with G-Cter in SUMO2) cross-link. Position 39 is a phosphoserine (S39). Positions 57–158 (GLMIPVFCVV…VVTLKIQLQS (102 aa)) constitute a CMP domain. Residue K161 forms a Glycyl lysine isopeptide (Lys-Gly) (interchain with G-Cter in SUMO2) linkage. The CUTL domain maps to 161 to 234 (KLEDLPAEQW…WYKKYKKIKV (74 aa)). A Glycyl lysine isopeptide (Lys-Gly) (interchain with G-Cter in SUMO) cross-link involves residue K233. K350 is covalently cross-linked (Glycyl lysine isopeptide (Lys-Gly) (interchain with G-Cter in SUMO); alternate). A Glycyl lysine isopeptide (Lys-Gly) (interchain with G-Cter in SUMO2); alternate cross-link involves residue K350. The segment at residues 350–437 (KPEPTNSSVE…ERDRIYQDER (88 aa)) is a DNA-binding region (CUT 1). Residues 435-473 (DERERSMNPNVSMVSSASSSPSSSRTPQAKTSTPTTDLP) form a disordered region. Residues 441–458 (MNPNVSMVSSASSSPSSS) are compositionally biased toward low complexity. S454 carries the phosphoserine modification. Over residues 459 to 470 (RTPQAKTSTPTT) the composition is skewed to polar residues. T467 carries the phosphothreonine modification. The CUT 2 DNA-binding region spans 473 to 560 (PIKVDGANIN…ERDVIYEEES (88 aa)). K475 participates in a covalent cross-link: Glycyl lysine isopeptide (Lys-Gly) (interchain with G-Cter in SUMO2). Over residues 580-593 (QVLHRQQSQPAKES) the composition is skewed to low complexity. Disordered stretches follow at residues 580-617 (QVLH…KPRS) and 694-733 (LLTE…IDQR). S594 carries the phosphoserine modification. Residues 615–674 (PRSRTKISLEALGILQSFIHDVGLYPDQEAIHTLSAQLDLPKHTIIKFFQNQRYHVKHHG) constitute a DNA-binding region (homeobox). Over residues 694 to 708 (LLTESEENDSEEGSE) the composition is skewed to acidic residues. Basic and acidic residues predominate over residues 709–733 (EMYKVEAEEENADKSKAAPAEIDQR). A Glycyl lysine isopeptide (Lys-Gly) (interchain with G-Cter in SUMO2) cross-link involves residue K724.

This sequence belongs to the CUT homeobox family. In terms of assembly, interacts with ATF4 and RUNX2; resulting in enhanced DNA binding and transactivation by these transcription factors. Interacts with PIAS1. Post-translationally, sumoylated by PIAS1. Sumoylation promotes nuclear localization, but represses transcription factor activity. In terms of tissue distribution, high expression in adult brain, moderate expression in fetal brain, and weak expression in adult liver, kidney, and spinal cord and in select brain regions, including amygdala, corpus callosum, caudate nucleus, and hippocampus.

It localises to the nucleus matrix. In terms of biological role, binds to DNA, at nuclear matrix- or scaffold-associated regions. Thought to recognize the sugar-phosphate structure of double-stranded DNA. Transcription factor controlling nuclear gene expression, by binding to matrix attachment regions (MARs) of DNA and inducing a local chromatin-loop remodeling. Acts as a docking site for several chromatin remodeling enzymes and also by recruiting corepressors (HDACs) or coactivators (HATs) directly to promoters and enhancers. Required for the initiation of the upper-layer neurons (UL1) specific genetic program and for the inactivation of deep-layer neurons (DL) and UL2 specific genes, probably by modulating BCL11B expression. Repressor of Ctip2 and regulatory determinant of corticocortical connections in the developing cerebral cortex. May play an important role in palate formation. Acts as a molecular node in a transcriptional network regulating skeletal development and osteoblast differentiation. This Homo sapiens (Human) protein is DNA-binding protein SATB2 (SATB2).